Reading from the N-terminus, the 643-residue chain is 1-deoxy-D-xylulose-5-phosphate synthase (643 aa).

Residues His-71 and Ser-112–Ala-114 contribute to the thiamine diphosphate site. Asp-144 serves as a coordination point for Mg(2+). Residues Gly-145–Ala-146, Asn-173, Tyr-284, and Glu-365 contribute to the thiamine diphosphate site. Asn-173 contacts Mg(2+).

This sequence belongs to the transketolase family. DXPS subfamily. In terms of assembly, homodimer. Mg(2+) serves as cofactor. Requires thiamine diphosphate as cofactor.

The catalysed reaction is D-glyceraldehyde 3-phosphate + pyruvate + H(+) = 1-deoxy-D-xylulose 5-phosphate + CO2. It functions in the pathway metabolic intermediate biosynthesis; 1-deoxy-D-xylulose 5-phosphate biosynthesis; 1-deoxy-D-xylulose 5-phosphate from D-glyceraldehyde 3-phosphate and pyruvate: step 1/1. In terms of biological role, catalyzes the acyloin condensation reaction between C atoms 2 and 3 of pyruvate and glyceraldehyde 3-phosphate to yield 1-deoxy-D-xylulose-5-phosphate (DXP). The sequence is that of 1-deoxy-D-xylulose-5-phosphate synthase from Mycobacterium leprae (strain Br4923).